A 437-amino-acid polypeptide reads, in one-letter code: Nuclear hormone receptor family member nhr-100 (437 aa).

A DNA-binding region (nuclear receptor) is located at residues 21–96; the sequence is DTSCLVCGDP…VGMDANAVRS (76 aa). NR C4-type zinc fingers lie at residues 24-44 and 60-79; these read CLVC…CNGC and CSFN…CRAC. An NR LBD domain is found at 141-409; that stretch reads QTKEIIAHML…SGGGLPYDIH (269 aa).

This sequence belongs to the nuclear hormone receptor family.

The protein resides in the nucleus. Orphan nuclear receptor. The polypeptide is Nuclear hormone receptor family member nhr-100 (nhr-100) (Caenorhabditis elegans).